We begin with the raw amino-acid sequence, 223 residues long: DNA mismatch repair protein MutH (223 aa).

It belongs to the MutH family.

Its subcellular location is the cytoplasm. Sequence-specific endonuclease that cleaves unmethylated GATC sequences. It is involved in DNA mismatch repair. The sequence is that of DNA mismatch repair protein MutH from Shewanella sp. (strain W3-18-1).